Reading from the N-terminus, the 287-residue chain is Ethylene-inducing xylanase 3 (287 aa).

Positions 1 to 19 are cleaved as a signal peptide; it reads MVCFSSLFVAASAIAVVFA. The 189-residue stretch at 31–219 folds into the GH11 domain; sequence QSTPSSQGTH…SSGSARINVA (189 aa). Catalysis depends on E115, which acts as the Nucleophile. The active-site Proton donor is the E206. Residues 252 to 287 form the CBM1 domain; sequence SCAARWGQCGGSGWNGATCCSAGTCQAQNQWYSQCL.

The protein belongs to the glycosyl hydrolase 11 (cellulase G) family.

It catalyses the reaction Endohydrolysis of (1-&gt;4)-beta-D-xylosidic linkages in xylans.. The protein operates within glycan degradation; xylan degradation. In terms of biological role, endo-1,4-beta-xylanase involved in the hydrolysis of xylan, a major structural heterogeneous polysaccharide found in plant biomass representing the second most abundant polysaccharide in the biosphere, after cellulose. Exhibits immunity-inducing activity and induces cell death in Nicotiana benthamiana. The protein is Ethylene-inducing xylanase 3 of Verticillium longisporum (Verticillium dahliae var. longisporum).